Here is a 372-residue protein sequence, read N- to C-terminus: 4-hydroxy-3-methylbut-2-en-1-yl diphosphate synthase (flavodoxin) (372 aa).

Cys-270, Cys-273, Cys-305, and Glu-312 together coordinate [4Fe-4S] cluster.

This sequence belongs to the IspG family. [4Fe-4S] cluster is required as a cofactor.

The enzyme catalyses (2E)-4-hydroxy-3-methylbut-2-enyl diphosphate + oxidized [flavodoxin] + H2O + 2 H(+) = 2-C-methyl-D-erythritol 2,4-cyclic diphosphate + reduced [flavodoxin]. It functions in the pathway isoprenoid biosynthesis; isopentenyl diphosphate biosynthesis via DXP pathway; isopentenyl diphosphate from 1-deoxy-D-xylulose 5-phosphate: step 5/6. Converts 2C-methyl-D-erythritol 2,4-cyclodiphosphate (ME-2,4cPP) into 1-hydroxy-2-methyl-2-(E)-butenyl 4-diphosphate. This is 4-hydroxy-3-methylbut-2-en-1-yl diphosphate synthase (flavodoxin) from Enterobacter sp. (strain 638).